The chain runs to 1206 residues: Methionine synthase (1206 aa).

A Hcy-binding domain is found at 1–314 (MRVTAANQHQ…DHIREVAAAV (314 aa)). Positions 233, 299, and 300 each coordinate Zn(2+). The Pterin-binding domain maps to 350–609 (VLMIGERTNA…IPEEQRQAAL (260 aa)). The B12-binding N-terminal domain occupies 642–735 (REAELAKLPL…HMEKSDCDFG (94 aa)). The region spanning 740 to 877 (KGRIVLATVK…SAKRGEALAP (138 aa)) is the B12-binding domain. Methylcob(III)alamin-binding positions include 750-754 (GDVHD), His-753, Ser-798, and Ala-856. The disordered stretch occupies residues 873 to 925 (EALAPGSPESLAAEADRNKETERKARHERSKRIAVQRKAAEEPVEVPERSDVP). Over residues 886–897 (EADRNKETERKA) the composition is skewed to basic and acidic residues. A compositionally biased stretch (basic residues) spans 898-907 (RHERSKRIAV). Residues 907–1206 (VQRKAAEEPV…HHPAAKYFNV (300 aa)) enclose the AdoMet activation domain. The span at 910-924 (KAAEEPVEVPERSDV) shows a compositional bias: basic and acidic residues. S-adenosyl-L-methionine-binding positions include Asp-954, Arg-1149, and 1203-1204 (YF).

Belongs to the vitamin-B12 dependent methionine synthase family. It depends on methylcob(III)alamin as a cofactor. Zn(2+) is required as a cofactor.

The catalysed reaction is (6S)-5-methyl-5,6,7,8-tetrahydrofolate + L-homocysteine = (6S)-5,6,7,8-tetrahydrofolate + L-methionine. It functions in the pathway amino-acid biosynthesis; L-methionine biosynthesis via de novo pathway; L-methionine from L-homocysteine (MetH route): step 1/1. In terms of biological role, catalyzes the transfer of a methyl group from methyl-cobalamin to homocysteine, yielding enzyme-bound cob(I)alamin and methionine. Subsequently, remethylates the cofactor using methyltetrahydrofolate. The sequence is that of Methionine synthase (metH) from Mycobacterium leprae (strain TN).